The following is a 130-amino-acid chain: C-X-C motif chemokine 5 (130 aa).

Residues 1–37 form the signal peptide; that stretch reads MSFQLRSSARIPSRSCSSFTLLAFLLLFTLPQHRAQA. 2 cysteine pairs are disulfide-bonded: cysteine 50/cysteine 76 and cysteine 52/cysteine 93.

This sequence belongs to the intercrine alpha (chemokine CxC) family. Monomer. Homodimer.

Its subcellular location is the secreted. Functionally, may participate in the recruitment of inflammatory cells by injured or infected tissue. The chain is C-X-C motif chemokine 5 (Cxcl5) from Rattus norvegicus (Rat).